The sequence spans 190 residues: Elongation factor P (190 aa).

An N6-(3,6-diaminohexanoyl)-5-hydroxylysine modification is found at lysine 34.

It belongs to the elongation factor P family. May be beta-lysylated on the epsilon-amino group of Lys-34 by the combined action of EpmA and EpmB, and then hydroxylated on the C5 position of the same residue by EpmC (if this protein is present). Lysylation is critical for the stimulatory effect of EF-P on peptide-bond formation. The lysylation moiety may extend toward the peptidyltransferase center and stabilize the terminal 3-CCA end of the tRNA. Hydroxylation of the C5 position on Lys-34 may allow additional potential stabilizing hydrogen-bond interactions with the P-tRNA.

The protein resides in the cytoplasm. The protein operates within protein biosynthesis; polypeptide chain elongation. Involved in peptide bond synthesis. Alleviates ribosome stalling that occurs when 3 or more consecutive Pro residues or the sequence PPG is present in a protein, possibly by augmenting the peptidyl transferase activity of the ribosome. Modification of Lys-34 is required for alleviation. This Hahella chejuensis (strain KCTC 2396) protein is Elongation factor P.